The chain runs to 447 residues: Phosphoglucosamine mutase (447 aa).

Residue S101 is the Phosphoserine intermediate of the active site. S101, D242, D244, and D246 together coordinate Mg(2+). S101 is subject to Phosphoserine.

The protein belongs to the phosphohexose mutase family. Mg(2+) serves as cofactor. In terms of processing, activated by phosphorylation.

The catalysed reaction is alpha-D-glucosamine 1-phosphate = D-glucosamine 6-phosphate. In terms of biological role, catalyzes the conversion of glucosamine-6-phosphate to glucosamine-1-phosphate. In Bradyrhizobium diazoefficiens (strain JCM 10833 / BCRC 13528 / IAM 13628 / NBRC 14792 / USDA 110), this protein is Phosphoglucosamine mutase.